The sequence spans 473 residues: MSSSPTESEILPKESHNSIDEQSQQPANTDTLVKDNSFNEQDDQEVDNDYKSNDEPVQSQDPISPNMASNESGNSENTSNYGSSRDENVYQKTTLWMGELEPWVTEAFIQQVWNTLGKAVKVKLIRNRYTGMNAGYCFVEFASPHEASSAMSMNNKPIPGTNHLFKLNWASGGGLREKSISKASEYSIFVGDLSPNVNEFDVYSLFASRYNSCKSAKIMTDPQTNVSRGYGFVRFTDENDQKSALAEMQGQICGDRPIRVGLATPKSKAHVFSPVNVVPVSMPPVGFYSAAQPVPQFADTANSTVFVGGLSKFVSEEELKYLFQNFGEIVYVKIPPGKGCGFVQFVNRQSAEIAINQLQGYPLGNSRIRLSWGRNQNPIAAPALNYQSQVSQTTIPATSLFPAMSLPPQAQFSPYPAVAPSPLALQTRGAPIGMEISIGSPALVPDQMHIPENGNSDTMPVPNTQGKHLSAEE.

Residues 1 to 86 (MSSSPTESEI…NTSNYGSSRD (86 aa)) are disordered. The segment covering 10-19 (ILPKESHNSI) has biased composition (basic and acidic residues). Composition is skewed to polar residues over residues 20–39 (DEQSQQPANTDTLVKDNSFN) and 55–68 (EPVQSQDPISPNMA). Ser-64 carries the post-translational modification Phosphoserine. Over residues 69-83 (SNESGNSENTSNYGS) the composition is skewed to low complexity. RRM domains lie at 95-165 (LWMG…NHLF), 188-260 (IFVG…PIRV), and 305-370 (VFVG…RIRL). Residues 448–473 (MHIPENGNSDTMPVPNTQGKHLSAEE) are disordered. The segment covering 453 to 467 (NGNSDTMPVPNTQGK) has biased composition (polar residues).

This is an uncharacterized protein from Schizosaccharomyces pombe (strain 972 / ATCC 24843) (Fission yeast).